The sequence spans 200 residues: Large ribosomal subunit protein uL4 (200 aa).

Residues 43-65 (RAQKTRSEVSGGGAKPWRQKGTG) form a disordered region.

The protein belongs to the universal ribosomal protein uL4 family. Part of the 50S ribosomal subunit.

Its function is as follows. One of the primary rRNA binding proteins, this protein initially binds near the 5'-end of the 23S rRNA. It is important during the early stages of 50S assembly. It makes multiple contacts with different domains of the 23S rRNA in the assembled 50S subunit and ribosome. Forms part of the polypeptide exit tunnel. The sequence is that of Large ribosomal subunit protein uL4 from Aliivibrio salmonicida (strain LFI1238) (Vibrio salmonicida (strain LFI1238)).